Consider the following 278-residue polypeptide: MALKTFKPVTPSLRQLVIVDRSELYKGKPVKALTEGKISSGGRNNLGRVTVRFRGGGHKRTLRNVDFKRREHAGKVGTVERIEYDPNRTAFIALVTYEGGAQSYILAPQRVKAGDKVVSGDSVDIKPGNAMPIGNMPVGTIVHNVELKIGKGGAIARSAGNYAQIVGRDQGYVTLRLNSGEQRLVHGQCYATVGAVSNPDHMNISLGKAGRKRWLGRRPHNRGVAMNPIDHPHGGGEGRTSGGRHPVTPWGFPTKGKKTRSNKRTDTFIVSSRHNRKK.

Residues 223-278 (GVAMNPIDHPHGGGEGRTSGGRHPVTPWGFPTKGKKTRSNKRTDTFIVSSRHNRKK) are disordered.

It belongs to the universal ribosomal protein uL2 family. Part of the 50S ribosomal subunit. Forms a bridge to the 30S subunit in the 70S ribosome.

One of the primary rRNA binding proteins. Required for association of the 30S and 50S subunits to form the 70S ribosome, for tRNA binding and peptide bond formation. It has been suggested to have peptidyltransferase activity; this is somewhat controversial. Makes several contacts with the 16S rRNA in the 70S ribosome. The polypeptide is Large ribosomal subunit protein uL2 (Methylobacterium nodulans (strain LMG 21967 / CNCM I-2342 / ORS 2060)).